The following is a 291-amino-acid chain: Acetyl-coenzyme A carboxylase carboxyl transferase subunit beta (291 aa).

In terms of domain architecture, CoA carboxyltransferase N-terminal spans 36–291 (MWVKCDGCGK…KILVIHGRGN (256 aa)). Zn(2+)-binding residues include C40, C43, C59, and C62. Residues 40-62 (CDGCGKVLYKNDMEKNNKVCYHC) form a C4-type zinc finger.

The protein belongs to the AccD/PCCB family. As to quaternary structure, acetyl-CoA carboxylase is a heterohexamer composed of biotin carboxyl carrier protein (AccB), biotin carboxylase (AccC) and two subunits each of ACCase subunit alpha (AccA) and ACCase subunit beta (AccD). Requires Zn(2+) as cofactor.

Its subcellular location is the cytoplasm. It catalyses the reaction N(6)-carboxybiotinyl-L-lysyl-[protein] + acetyl-CoA = N(6)-biotinyl-L-lysyl-[protein] + malonyl-CoA. The protein operates within lipid metabolism; malonyl-CoA biosynthesis; malonyl-CoA from acetyl-CoA: step 1/1. Its function is as follows. Component of the acetyl coenzyme A carboxylase (ACC) complex. Biotin carboxylase (BC) catalyzes the carboxylation of biotin on its carrier protein (BCCP) and then the CO(2) group is transferred by the transcarboxylase to acetyl-CoA to form malonyl-CoA. In Clostridium kluyveri (strain NBRC 12016), this protein is Acetyl-coenzyme A carboxylase carboxyl transferase subunit beta.